We begin with the raw amino-acid sequence, 476 residues long: Cysteine--tRNA ligase (476 aa).

C36 is a Zn(2+) binding site. Positions P38–N48 match the 'HIGH' region motif. The Zn(2+) site is built by C221, H246, and E250. Residues K278–S282 carry the 'KMSKS' region motif. Residue K281 participates in ATP binding.

The protein belongs to the class-I aminoacyl-tRNA synthetase family. As to quaternary structure, monomer. Zn(2+) serves as cofactor.

It localises to the cytoplasm. The enzyme catalyses tRNA(Cys) + L-cysteine + ATP = L-cysteinyl-tRNA(Cys) + AMP + diphosphate. The polypeptide is Cysteine--tRNA ligase (Chlamydia caviae (strain ATCC VR-813 / DSM 19441 / 03DC25 / GPIC) (Chlamydophila caviae)).